The primary structure comprises 168 residues: ATP synthase subunit b (168 aa).

The helical transmembrane segment at 10–30 (STILGNFILVTASFAVLIILI) threads the bilayer.

This sequence belongs to the ATPase B chain family. In terms of assembly, F-type ATPases have 2 components, F(1) - the catalytic core - and F(0) - the membrane proton channel. F(1) has five subunits: alpha(3), beta(3), gamma(1), delta(1), epsilon(1). F(0) has three main subunits: a(1), b(2) and c(10-14). The alpha and beta chains form an alternating ring which encloses part of the gamma chain. F(1) is attached to F(0) by a central stalk formed by the gamma and epsilon chains, while a peripheral stalk is formed by the delta and b chains.

The protein localises to the cell membrane. Its function is as follows. F(1)F(0) ATP synthase produces ATP from ADP in the presence of a proton or sodium gradient. F-type ATPases consist of two structural domains, F(1) containing the extramembraneous catalytic core and F(0) containing the membrane proton channel, linked together by a central stalk and a peripheral stalk. During catalysis, ATP synthesis in the catalytic domain of F(1) is coupled via a rotary mechanism of the central stalk subunits to proton translocation. Component of the F(0) channel, it forms part of the peripheral stalk, linking F(1) to F(0). The sequence is that of ATP synthase subunit b from Streptococcus suis (strain 98HAH33).